The primary structure comprises 391 residues: Phosphatidate cytidylyltransferase 4, chloroplastic (391 aa).

The N-terminal 61 residues, methionine 1–valine 61, are a transit peptide targeting the chloroplast. Transmembrane regions (helical) follow at residues isoleucine 102–phenylalanine 122, phenylalanine 175–valine 195, phenylalanine 202–tryptophan 222, valine 254–phenylalanine 274, isoleucine 298–proline 318, and leucine 321–threonine 341.

Belongs to the CDS family. The cofactor is Mg(2+).

Its subcellular location is the plastid. The protein localises to the chloroplast membrane. It carries out the reaction a 1,2-diacyl-sn-glycero-3-phosphate + CTP + H(+) = a CDP-1,2-diacyl-sn-glycerol + diphosphate. Its pathway is phospholipid metabolism; CDP-diacylglycerol biosynthesis; CDP-diacylglycerol from sn-glycerol 3-phosphate: step 3/3. Its activity is regulated as follows. Highest activities is obtained at about 30 mM CTP and 2 mM phosphatidic acid (PA). Its function is as follows. May be involved in the synthesis of minor phospholipids and in modulation of IP3-mediated signal transduction. Promotes the biosynthesis of plastidial phosphatidylglycerol (PG) which is required for structure and function of thylakoid membranes and, hence, for photoautotrophic growth. The polypeptide is Phosphatidate cytidylyltransferase 4, chloroplastic (Arabidopsis thaliana (Mouse-ear cress)).